Reading from the N-terminus, the 205-residue chain is Cytochrome c oxidase subunit 2 (205 aa).

Cu cation-binding residues include histidine 115, cysteine 150, glutamate 152, cysteine 154, histidine 158, and methionine 161. Glutamate 152 lines the Mg(2+) pocket.

It belongs to the cytochrome c oxidase subunit 2 family. Component of the cytochrome c oxidase (complex IV, CIV), a multisubunit enzyme composed of a catalytic core of 3 subunits and several supernumerary subunits. The complex exists as a monomer or a dimer and forms supercomplexes (SCs) in the inner mitochondrial membrane with ubiquinol-cytochrome c oxidoreductase (cytochrome b-c1 complex, complex III, CIII). The cofactor is Cu cation.

It is found in the mitochondrion inner membrane. The catalysed reaction is 4 Fe(II)-[cytochrome c] + O2 + 8 H(+)(in) = 4 Fe(III)-[cytochrome c] + 2 H2O + 4 H(+)(out). Its function is as follows. Component of the cytochrome c oxidase, the last enzyme in the mitochondrial electron transport chain which drives oxidative phosphorylation. The respiratory chain contains 3 multisubunit complexes succinate dehydrogenase (complex II, CII), ubiquinol-cytochrome c oxidoreductase (cytochrome b-c1 complex, complex III, CIII) and cytochrome c oxidase (complex IV, CIV), that cooperate to transfer electrons derived from NADH and succinate to molecular oxygen, creating an electrochemical gradient over the inner membrane that drives transmembrane transport and the ATP synthase. Cytochrome c oxidase is the component of the respiratory chain that catalyzes the reduction of oxygen to water. Electrons originating from reduced cytochrome c in the intermembrane space (IMS) are transferred via the dinuclear copper A center (CU(A)) of subunit 2 and heme A of subunit 1 to the active site in subunit 1, a binuclear center (BNC) formed by heme A3 and copper B (CU(B)). The BNC reduces molecular oxygen to 2 water molecules using 4 electrons from cytochrome c in the IMS and 4 protons from the mitochondrial matrix. This chain is Cytochrome c oxidase subunit 2 (COII), found in Paramecium tetraurelia.